Here is a 421-residue protein sequence, read N- to C-terminus: Synaptotagmin-1 (421 aa).

Topologically, residues methionine 1–proline 57 are vesicular. A glycan (N-linked (GlcNAc...) asparagine) is linked at asparagine 24. A helical membrane pass occupies residues tryptophan 58–cysteine 79. Residues cysteine 74, cysteine 75, cysteine 77, cysteine 79, and cysteine 82 are each lipidated (S-palmitoyl cysteine). The Cytoplasmic portion of the chain corresponds to lysine 80 to lysine 421. The segment at threonine 112 to lysine 141 is disordered. A compositionally biased stretch (acidic residues) spans aspartate 121–lysine 133. The residue at position 128 (threonine 128) is a Phosphothreonine. Residues glutamate 135–asparagine 381 form a phospholipid binding region. Residues lysine 141 to arginine 260 form the C2 1 domain. Leucine 171, aspartate 172, and aspartate 178 together coordinate Ca(2+). Tyrosine 229 bears the Phosphotyrosine mark. Ca(2+) is bound by residues aspartate 230, phenylalanine 231, aspartate 232, serine 235, lysine 236, and aspartate 238. Serine 264 carries the post-translational modification Phosphoserine. The 134-residue stretch at lysine 272–histidine 405 folds into the C2 2 domain. Residues aspartate 303 and aspartate 309 each coordinate Ca(2+). Serine 342 and serine 344 each carry phosphoserine. Ca(2+) is bound by residues aspartate 363, aspartate 365, and aspartate 371.

The protein belongs to the synaptotagmin family. In terms of assembly, homotetramer. Heterodimer; heterodimerizes with SYT2 in presence of calcium. Interacts with SCAMP5. Interacts with STON2. Forms a complex with SV2B, syntaxin 1 and SNAP25. Interacts with SV2A, SV2B and SV2C. Interacts with RIMS1. Interacts with PRRT2. Interacts with DNAJC5 in a phosphorylation-dependent manner. Interacts (via N-terminus) with RAB3A. Interacts with SYT12. Interacts with calmodulin. Interacts with DNM1 (via C-terminal proline-rich domain (PRD)); this interaction facilitates vesicle fission during clathrin-mediated endocytosis (CME). The cofactor is Ca(2+). Glycosylated. Expressed in the brain and adrenal medulla (at protein level).

It is found in the cytoplasmic vesicle. Its subcellular location is the secretory vesicle membrane. It localises to the secretory vesicle. The protein resides in the synaptic vesicle membrane. The protein localises to the chromaffin granule membrane. It is found in the cytoplasm. In terms of biological role, calcium sensor that participates in triggering neurotransmitter release at the synapse. May have a regulatory role in the membrane interactions during trafficking of synaptic vesicles at the active zone of the synapse. It binds acidic phospholipids with a specificity that requires the presence of both an acidic head group and a diacyl backbone. A Ca(2+)-dependent interaction between synaptotagmin and putative receptors for activated protein kinase C has also been reported. It can bind to at least three additional proteins in a Ca(2+)-independent manner; these are neurexins, syntaxin and AP2. Plays a role in dendrite formation by melanocytes. In Mus musculus (Mouse), this protein is Synaptotagmin-1.